The sequence spans 397 residues: Riboflavin biosynthesis protein RibBA (397 aa).

Residues 1 to 199 form a DHBP synthase region; that stretch reads MFHRIEEALE…IEDLIAYRRH (199 aa). Residues 26 to 27, Asp-31, 138 to 142, and Glu-162 each bind D-ribulose 5-phosphate; these read RE and RAGHT. Glu-27 contributes to the Mg(2+) binding site. Position 141 (His-141) interacts with Mg(2+). Residues 200–397 form a GTP cyclohydrolase II region; it reads HETLVTREVE…VNKLGHLLNL (198 aa). Residue 250–254 coordinates GTP; that stretch reads RVHSE. Zn(2+) contacts are provided by Cys-255, Cys-266, and Cys-268. Residues Gln-271, 293–295, and Thr-315 contribute to the GTP site; that span reads EGR. Asp-327 acts as the Proton acceptor; for GTP cyclohydrolase activity in catalysis. Arg-329 serves as the catalytic Nucleophile; for GTP cyclohydrolase activity. Residues Thr-350 and Lys-355 each contribute to the GTP site.

In the N-terminal section; belongs to the DHBP synthase family. The protein in the C-terminal section; belongs to the GTP cyclohydrolase II family. Requires Mg(2+) as cofactor. Mn(2+) serves as cofactor. The cofactor is Zn(2+).

It catalyses the reaction D-ribulose 5-phosphate = (2S)-2-hydroxy-3-oxobutyl phosphate + formate + H(+). The catalysed reaction is GTP + 4 H2O = 2,5-diamino-6-hydroxy-4-(5-phosphoribosylamino)-pyrimidine + formate + 2 phosphate + 3 H(+). It participates in cofactor biosynthesis; riboflavin biosynthesis; 2-hydroxy-3-oxobutyl phosphate from D-ribulose 5-phosphate: step 1/1. It functions in the pathway cofactor biosynthesis; riboflavin biosynthesis; 5-amino-6-(D-ribitylamino)uracil from GTP: step 1/4. Its function is as follows. Catalyzes the conversion of D-ribulose 5-phosphate to formate and 3,4-dihydroxy-2-butanone 4-phosphate. Functionally, catalyzes the conversion of GTP to 2,5-diamino-6-ribosylamino-4(3H)-pyrimidinone 5'-phosphate (DARP), formate and pyrophosphate. In Bacillus cereus (strain ATCC 10987 / NRS 248), this protein is Riboflavin biosynthesis protein RibBA.